The primary structure comprises 887 residues: Exosome complex component 10 (887 aa).

Over residues 1-10 the composition is skewed to basic and acidic residues; sequence MAPPSPREHQ. Residues 1-23 form a disordered region; it reads MAPPSPREHQSAPATSATKPDAE. Residue K19 forms a Glycyl lysine isopeptide (Lys-Gly) (interchain with G-Cter in SUMO2) linkage. In terms of domain architecture, 3'-5' exonuclease spans 289 to 455; it reads HLVSSLDELV…YIYDRMRLEL (167 aa). Positions 313, 315, 371, and 440 each coordinate Mg(2+). Positions 503–583 constitute an HRDC domain; the sequence is NSQQLTAFQL…QQAREMPLLK (81 aa). A Glycyl lysine isopeptide (Lys-Gly) (interchain with G-Cter in SUMO1); alternate cross-link involves residue K583. K583 participates in a covalent cross-link: Glycyl lysine isopeptide (Lys-Gly) (interchain with G-Cter in SUMO2); alternate. Residue K710 forms a Glycyl lysine isopeptide (Lys-Gly) (interchain with G-Cter in SUMO2) linkage. Disordered regions lie at residues 734-757 and 777-887; these read KEPK…AKEE and NATK…WPKR. Positions 778–796 are enriched in basic and acidic residues; sequence ATKKRERATSDLRTIEQKQ. A Phosphoserine modification is found at S823. Glycyl lysine isopeptide (Lys-Gly) (interchain with G-Cter in SUMO2) cross-links involve residues K835, K861, and K875.

It belongs to the exosome component 10/RRP6 family. In terms of assembly, component of the RNA exosome complex. The catalytically inactive RNA exosome core complex (Exo-9) associates with the catalytic subunit EXOSC10/RRP6 (via its N-terminus). Exo-9 may associate with DIS3 to form the nucleolar exosome complex, or DIS3L to form the cytoplasmic exosome complex. The RNA exosome complex interacts with cofactors C1D/RRP47, MPHOSPH6/MPP6 and MTREX/MTR4. Interacts with MTREX; the interaction with MTREX mediates the association of MTREX with nuclear RNA exosomes. Part of the small subunit (SSU) processome, composed of more than 70 proteins and the RNA chaperone small nucleolar RNA (snoRNA) U3. Interacts with ALYREF/THOC4. Interacts with DHX36; this interaction occurs in a RNase-insensitive manner. Interacts with NRDE2. Interacts (via C-terminus) with USP36 (via C-terminus); the interaction is facilitated by the association with RNA and promotes sumoylation of EXOSC10. Mg(2+) serves as cofactor. Post-translationally, sumoylated by USP36; sumoylation does not significantly affect EXOSC10 nucleolar localization and association with core exosome and USP36, but regulates the nucleolar RNA exosome activity in rRNA processing by promoting binding of EXOSC10 to pre-rRNAs. Effects of sumoylation on EXOSC10 levels vary between different studies. Sumoylation of EXOSC10 is required for the modulation of EXOSC10 effects on cellular protein translation and cell proliferation. Sumoylation is promoted by mild hypothermia. As to expression, expressed in ovary (at protein level). Expressed in testis (at protein level). Expressed in lung (at protein level).

The protein localises to the cytoplasm. Its subcellular location is the nucleus. The protein resides in the nucleolus. It localises to the nucleoplasm. Functionally, catalytic component of the RNA exosome complex which has 3'-&gt;5' exoribonuclease activity and participates in a multitude of cellular RNA processing and degradation events. In the nucleus, the RNA exosome complex is involved in proper maturation of stable RNA species such as rRNA, snRNA and snoRNA, in the elimination of RNA processing by-products and non-coding 'pervasive' transcripts, such as antisense RNA species and promoter-upstream transcripts (PROMPTs), and of mRNAs with processing defects, thereby limiting or excluding their export to the cytoplasm. Part of the small subunit (SSU) processome, first precursor of the small eukaryotic ribosomal subunit. During the assembly of the SSU processome in the nucleolus, many ribosome biogenesis factors, an RNA chaperone and ribosomal proteins associate with the nascent pre-rRNA and work in concert to generate RNA folding, modifications, rearrangements and cleavage as well as targeted degradation of pre-ribosomal RNA by the RNA exosome. The RNA exosome may be involved in Ig class switch recombination (CSR) and/or Ig variable region somatic hypermutation (SHM) by targeting AICDA deamination activity to transcribed dsDNA substrates. In the cytoplasm, the RNA exosome complex is involved in general mRNA turnover and specifically degrades inherently unstable mRNAs containing AU-rich elements (AREs) within their 3' untranslated regions, and in RNA surveillance pathways, preventing translation of aberrant mRNAs. It seems to be involved in degradation of histone mRNA. EXOSC10 is required for nucleolar localization of C1D and probably mediates the association of MTREX, C1D and MPHOSPH6 with the RNA exosome involved in the maturation of 5.8S rRNA. Plays a role in the recruitment of replication protein A complex (RPA) and RAD51 to DNA double-strand breaks caused by irradiation, contributing to DNA repair by homologous recombination. Regulates levels of damage-induced RNAs in order to prevent DNA-RNA hybrid formation at DNA double-strand breaks and limit DNA end resection after damage. Plays a role in oocyte development, maturation and survival. Required for normal testis development and mitotic division of spermatogonia. Plays a role in proper embryo development. Required for global protein translation. Required for cell proliferation. This is Exosome complex component 10 (Exosc10) from Mus musculus (Mouse).